Here is a 39-residue protein sequence, read N- to C-terminus: Large ribosomal subunit protein bL36 (39 aa).

It belongs to the bacterial ribosomal protein bL36 family.

This chain is Large ribosomal subunit protein bL36, found in Leuconostoc mesenteroides subsp. mesenteroides (strain ATCC 8293 / DSM 20343 / BCRC 11652 / CCM 1803 / JCM 6124 / NCDO 523 / NBRC 100496 / NCIMB 8023 / NCTC 12954 / NRRL B-1118 / 37Y).